The sequence spans 520 residues: DNA-(apurinic or apyrimidinic site) endonuclease 2 (520 aa).

Glutamate 59 contributes to the Mg(2+) binding site. Tyrosine 181 is a catalytic residue. Positions 222, 224, and 353 each coordinate Mg(2+). Aspartate 222 functions as the Proton donor/acceptor in the catalytic mechanism. 4 residues coordinate Zn(2+): cysteine 476, histidine 478, cysteine 500, and cysteine 514. A GRF-type zinc finger spans residues 476–520; that stretch reads CRHGEESMLKTSKTSANPGRKFWICKRSRGDSNNTESSCGFFQWV.

Belongs to the DNA repair enzymes AP/ExoA family. Mg(2+) is required as a cofactor. It depends on Mn(2+) as a cofactor.

The protein localises to the nucleus. It catalyses the reaction Exonucleolytic cleavage in the 3'- to 5'-direction to yield nucleoside 5'-phosphates.. DNA repair enzyme that cleaves apurinic/apyrimidinic (AP) sites and removes 3'-blocking groups present at single strand breaks of damaged DNA. In Saccharomyces cerevisiae (strain ATCC 204508 / S288c) (Baker's yeast), this protein is DNA-(apurinic or apyrimidinic site) endonuclease 2 (APN2).